We begin with the raw amino-acid sequence, 483 residues long: Dual specificity protein phosphatase CDC14C (483 aa).

The interval methionine 1 to aspartate 45 is disordered. A Nucleolar localization signal motif is present at residues methionine 1–aspartate 53. Residues alanine 12–serine 26 show a composition bias toward low complexity. The tract at residues proline 43–asparagine 197 is a. The linker stretch occupies residues serine 198–glutamate 211. A b region spans residues asparagine 212 to lysine 378. The Tyrosine-protein phosphatase domain occupies glycine 213 to phenylalanine 373. Residue cysteine 313 is the Phosphocysteine intermediate of the active site. Positions glutamine 407–glutamine 426 are disordered. Residues aspartate 408–isoleucine 421 show a composition bias toward acidic residues. The chain crosses the membrane as a helical span at residues isoleucine 444–valine 466.

This sequence belongs to the protein-tyrosine phosphatase family. Non-receptor class CDC14 subfamily.

It is found in the membrane. It localises to the nucleus. The protein localises to the nucleolus. The protein resides in the cytoplasm. Its subcellular location is the cytoskeleton. It catalyses the reaction O-phospho-L-tyrosyl-[protein] + H2O = L-tyrosyl-[protein] + phosphate. The enzyme catalyses O-phospho-L-seryl-[protein] + H2O = L-seryl-[protein] + phosphate. The catalysed reaction is O-phospho-L-threonyl-[protein] + H2O = L-threonyl-[protein] + phosphate. Functionally, dual-specificity phosphatase. Preferentially dephosphorylates proteins modified by proline-directed kinases. The protein is Dual specificity protein phosphatase CDC14C of Symphalangus syndactylus (Siamang).